The primary structure comprises 1015 residues: DNA ligase 3 (1015 aa).

The segment at 94 to 186 (FCVDYAKRGT…QISQHIADLS (93 aa)) adopts a PARP-type zinc-finger fold. Residues C106, C109, H140, and C143 each coordinate Zn(2+). Residues S211, S217, S228, and S244 each carry the phosphoserine modification. The disordered stretch occupies residues 229–255 (GFSAAKPNNSEQAPSSPAPGTSLSASK). A compositionally biased stretch (polar residues) spans 234 to 253 (KPNNSEQAPSSPAPGTSLSA). 4 interaction with DNA regions span residues 279 to 282 (PSYN), 323 to 328 (VYNLND), 393 to 396 (TKED), and 426 to 432 (KMNSGAK). An ATP-binding site is contributed by E511. The active-site N6-AMP-lysine intermediate is K513. ATP-binding residues include R518 and R533. E565 and E660 together coordinate Mg(2+). ATP-binding residues include K665, R676, and K680. Residues 849 to 926 (DEASPTTGGS…KSSPVKVGMK (78 aa)) form a disordered region. Low complexity predominate over residues 854 to 884 (TTGGSSGENEGTAGSAGPCKGPPSKSSASAK). A Phosphoserine modification is found at S919. A BRCT domain is found at 939–1015 (VLLDVFTGVR…IRKRRLIAPC (77 aa)).

This sequence belongs to the ATP-dependent DNA ligase family. Isoform 3 interacts (via BRCT domain) with the nuclear DNA-repair protein XRCC1. Interacts with POLG. Interacts with POLB. The cofactor is Mg(2+). As to expression, the alpha isoform is expressed in all tissues, while the beta isoform is expressed only in the testis.

It is found in the nucleus. The catalysed reaction is ATP + (deoxyribonucleotide)n-3'-hydroxyl + 5'-phospho-(deoxyribonucleotide)m = (deoxyribonucleotide)n+m + AMP + diphosphate.. In terms of biological role, the alpha isoform interacts with DNA-repair protein XRCC1 and can correct defective DNA strand-break repair and sister chromatid exchange following treatment with ionizing radiation and alkylating agents. The beta isoform does not interact with XRCC1 and may be specifically involved in the completion of homologous recombination events that occur during meiotic prophase. The protein is DNA ligase 3 (Lig3) of Mus musculus (Mouse).